The primary structure comprises 238 residues: Adenylate dimethylallyltransferase (238 aa).

This sequence belongs to the isopentenyl transferase family.

The catalysed reaction is dimethylallyl diphosphate + AMP = N(6)-(dimethylallyl)adenosine 5'-phosphate + diphosphate. In terms of biological role, transfers dimethylallyl groups to AMP as part of the biosynthesis of cytokinin phytohormones. The chain is Adenylate dimethylallyltransferase (tzs) from Ralstonia solanacearum (Pseudomonas solanacearum).